A 336-amino-acid polypeptide reads, in one-letter code: Ornithine carbamoyltransferase, catabolic (336 aa).

Carbamoyl phosphate-binding positions include 62–65, Gln89, Arg113, and 140–143; these read STRT and HPTQ. Residues Asn172, Asp236, and 240 to 241 contribute to the L-ornithine site; that span reads SM. Residues 277 to 278 and Arg322 each bind carbamoyl phosphate; that span reads CL.

This sequence belongs to the aspartate/ornithine carbamoyltransferase superfamily. OTCase family.

Its subcellular location is the cytoplasm. The enzyme catalyses carbamoyl phosphate + L-ornithine = L-citrulline + phosphate + H(+). The protein operates within amino-acid degradation; L-arginine degradation via ADI pathway; carbamoyl phosphate from L-arginine: step 2/2. In terms of biological role, reversibly catalyzes the transfer of the carbamoyl group from carbamoyl phosphate (CP) to the N(epsilon) atom of ornithine (ORN) to produce L-citrulline. The sequence is that of Ornithine carbamoyltransferase, catabolic from Staphylococcus aureus (strain MRSA252).